The chain runs to 357 residues: GDP-mannose transporter 2 (357 aa).

Residues 1 to 43 (MASTRNGISKDELLPTYELQSQRDVENSGSVTSFASKISNNAA) are Cytoplasmic-facing. A helical membrane pass occupies residues 44 to 64 (AAVLAYCLSSISMTLVNKYVV). The Lumenal portion of the chain corresponds to 65 to 68 (SGAS). A helical membrane pass occupies residues 69-89 (WNLSFLYLAIQSFIGTVAIMV). The Cytoplasmic segment spans residues 90 to 107 (CKKAGLIQNLGLFDLKKA). A helical membrane pass occupies residues 108 to 128 (QTWLPISLLLVGMIYTGNKAL). A topological domain (lumenal) is located at residue Gln129. A helical transmembrane segment spans residues 130-150 (FLSVPVYTIFKNLTIIVIAYG). Residues 151 to 161 (EVFMVGGSVKP) are Cytoplasmic-facing. Residues 162–182 (LALLSFGLMVLSSVVAAWADI) traverse the membrane as a helical segment. At 183–196 (QIATAATAKASSDS) the chain is on the lumenal side. Residues 197–217 (AVATLSALNAGYAWMGTNVVF) traverse the membrane as a helical segment. At 218–238 (SASYALGMRRVIKKTNFDNWD) the chain is on the cytoplasmic side. A helical membrane pass occupies residues 239-259 (VMFYNNLLSVPILLLSSLLVE). Over 260 to 277 (DWSSENLQRNFPAESRQS) the chain is Lumenal. The chain crosses the membrane as a helical span at residues 278 to 298 (LVIGIFYSGVAAIFISYCTAW). Topologically, residues 299-306 (CVRATSST) are cytoplasmic. The helical transmembrane segment at 307–327 (TYAMVGALNKLPLAVAGIVFF) threads the bilayer. Residues 328–332 (AAPVT) are Lumenal-facing. The helical transmembrane segment at 333–352 (FGSVSAIVLGFISGLVYTWA) threads the bilayer. The Cytoplasmic portion of the chain corresponds to 353-357 (KSTGA).

It belongs to the TPT transporter family. SLC35D subfamily. As to quaternary structure, homooligomer.

It is found in the golgi apparatus membrane. The protein resides in the cytoplasmic vesicle membrane. It localises to the endoplasmic reticulum membrane. Involved in the import of GDP-mannose from the cytoplasm into the Golgi lumen. This Emericella nidulans (strain FGSC A4 / ATCC 38163 / CBS 112.46 / NRRL 194 / M139) (Aspergillus nidulans) protein is GDP-mannose transporter 2 (gmt2).